Consider the following 242-residue polypeptide: Probable transcriptional regulatory protein STH1004 (242 aa).

This sequence belongs to the TACO1 family.

Its subcellular location is the cytoplasm. The protein is Probable transcriptional regulatory protein STH1004 of Symbiobacterium thermophilum (strain DSM 24528 / JCM 14929 / IAM 14863 / T).